A 244-amino-acid polypeptide reads, in one-letter code: N-(5'-phosphoribosyl)anthranilate isomerase 3, chloroplastic (244 aa).

Residues 1–32 constitute a chloroplast transit peptide; the sequence is MSTGISSDLHLHPRALNFSKTSKSGLSNRKVS.

The protein belongs to the TrpF family.

The protein resides in the plastid. It localises to the chloroplast. It carries out the reaction N-(5-phospho-beta-D-ribosyl)anthranilate = 1-(2-carboxyphenylamino)-1-deoxy-D-ribulose 5-phosphate. The protein operates within amino-acid biosynthesis; L-tryptophan biosynthesis; L-tryptophan from chorismate: step 3/5. In Arabidopsis thaliana (Mouse-ear cress), this protein is N-(5'-phosphoribosyl)anthranilate isomerase 3, chloroplastic (PAI3).